A 949-amino-acid polypeptide reads, in one-letter code: Protein translocase subunit SecA (949 aa).

Residues Gln-87, 105–109 (GEGKT), and Asp-524 contribute to the ATP site. 2 disordered regions span residues 852–876 (PPPGENGFSGGMQEISGPQGGSSGG) and 896–939 (LEFS…GSGK). Residues Cys-933, Cys-935, Cys-944, and His-945 each coordinate Zn(2+).

It belongs to the SecA family. As to quaternary structure, monomer and homodimer. Part of the essential Sec protein translocation apparatus which comprises SecA, SecYEG and auxiliary proteins SecDF-YajC and YidC. Zn(2+) serves as cofactor.

Its subcellular location is the cell inner membrane. The protein localises to the cytoplasm. It carries out the reaction ATP + H2O + cellular proteinSide 1 = ADP + phosphate + cellular proteinSide 2.. Part of the Sec protein translocase complex. Interacts with the SecYEG preprotein conducting channel. Has a central role in coupling the hydrolysis of ATP to the transfer of proteins into and across the cell membrane, serving both as a receptor for the preprotein-SecB complex and as an ATP-driven molecular motor driving the stepwise translocation of polypeptide chains across the membrane. The chain is Protein translocase subunit SecA from Methylocella silvestris (strain DSM 15510 / CIP 108128 / LMG 27833 / NCIMB 13906 / BL2).